The following is a 445-amino-acid chain: Phosphoglucosamine mutase (445 aa).

Catalysis depends on S103, which acts as the Phosphoserine intermediate. Residues S103, D240, D242, and D244 each coordinate Mg(2+). Phosphoserine is present on S103.

Belongs to the phosphohexose mutase family. Mg(2+) serves as cofactor. Post-translationally, activated by phosphorylation.

The enzyme catalyses alpha-D-glucosamine 1-phosphate = D-glucosamine 6-phosphate. Functionally, catalyzes the conversion of glucosamine-6-phosphate to glucosamine-1-phosphate. In Cellvibrio japonicus (strain Ueda107) (Pseudomonas fluorescens subsp. cellulosa), this protein is Phosphoglucosamine mutase.